A 256-amino-acid chain; its full sequence is Small ribosomal subunit protein eS1 (256 aa).

Basic residues predominate over residues 1 to 18 (MAVGKNKRLSKGKKGIKK). The interval 1 to 20 (MAVGKNKRLSKGKKGIKKRT) is disordered. Residue Ala-2 is modified to N-acetylalanine; partial.

The protein belongs to the eukaryotic ribosomal protein eS1 family. As to quaternary structure, component of the small ribosomal subunit. Mature ribosomes consist of a small (40S) and a large (60S) subunit. The 40S subunit contains about 33 different proteins and 1 molecule of RNA (18S). The 60S subunit contains about 49 different proteins and 3 molecules of RNA (25S, 5.8S and 5S).

It localises to the cytoplasm. This chain is Small ribosomal subunit protein eS1 (rps1), found in Aspergillus flavus (strain ATCC 200026 / FGSC A1120 / IAM 13836 / NRRL 3357 / JCM 12722 / SRRC 167).